The chain runs to 151 residues: Major latex allergen Hev b 5 (151 aa).

Positions 1–151 (MASVEVESAA…TEVPVEKTEE (151 aa)) are disordered. N-acetylalanine is present on alanine 2. Over residues 17 to 31 (ETPEVTKAEETKTEE) the composition is skewed to basic and acidic residues. 2 stretches are compositionally biased toward low complexity: residues 36–45 (PASEQETADA) and 53–64 (TAAPAEPEAPAP). Composition is skewed to basic and acidic residues over residues 65 to 80 (ETEK…KTEE), 103 to 113 (EEPKHETKETE), and 122 to 133 (EGEKPAEEEKPI). The segment covering 134 to 144 (TEAAETATTEV) has biased composition (low complexity).

The protein to kiwi fruit protein PKIWI501. In terms of processing, the N-terminus is blocked.

The sequence is that of Major latex allergen Hev b 5 from Hevea brasiliensis (Para rubber tree).